The primary structure comprises 59 residues: Cecropin-A2 (59 aa).

Positions 1–23 (MNFNKLFAIVLLAALVLLGQTEA) are cleaved as a signal peptide.

Belongs to the cecropin family.

Its subcellular location is the secreted. Functionally, cecropins have lytic and antibacterial activity against several Gram-positive and Gram-negative bacteria. This chain is Cecropin-A2 (CECA2), found in Aedes albopictus (Asian tiger mosquito).